A 644-amino-acid chain; its full sequence is Exoribonuclease 2 (644 aa).

Residues R189–K516 enclose the RNB domain. The S1 motif domain occupies D561–A643.

It belongs to the RNR ribonuclease family. RNase II subfamily.

It localises to the cytoplasm. The enzyme catalyses Exonucleolytic cleavage in the 3'- to 5'-direction to yield nucleoside 5'-phosphates.. In terms of biological role, involved in mRNA degradation. Hydrolyzes single-stranded polyribonucleotides processively in the 3' to 5' direction. In Klebsiella pneumoniae subsp. pneumoniae (strain ATCC 700721 / MGH 78578), this protein is Exoribonuclease 2.